The primary structure comprises 192 residues: UPF0149 protein YE3397 (192 aa).

The protein belongs to the UPF0149 family.

The polypeptide is UPF0149 protein YE3397 (Yersinia enterocolitica serotype O:8 / biotype 1B (strain NCTC 13174 / 8081)).